The sequence spans 470 residues: Monocarboxylate transporter 4 (470 aa).

Over 1–17 the chain is Cytoplasmic; the sequence is MGGAVVDEGPTGIKAPD. Residues 18 to 38 traverse the membrane as a helical segment; the sequence is GGWGWAVLFGCFIITGFSYAF. Residues 39–61 are Extracellular-facing; sequence PKAVSVFFKELMHEFGIGYSDTA. A helical transmembrane segment spans residues 62-82; sequence WISSILLAMLYGTGPLCSVCV. The Cytoplasmic portion of the chain corresponds to 83–84; sequence NR. A helical transmembrane segment spans residues 85 to 105; it reads FGCRPVMLVGGLFASLGMVAA. Over 106–109 the chain is Extracellular; that stretch reads SFCR. Residues 110 to 130 form a helical membrane-spanning segment; sequence SIIQIYLTTGVITGLGLALNF. Topologically, residues 131–149 are cytoplasmic; that stretch reads QPSLIMLNRYFNKRRPIAN. Residues 150 to 170 traverse the membrane as a helical segment; that stretch reads GLAAAGSPVFLCALSPLGQLL. Topologically, residues 171-179 are extracellular; the sequence is QDHYGWRGG. A helical membrane pass occupies residues 180–200; it reads FLILGGLLLNCCVCAALMRPL. The Cytoplasmic portion of the chain corresponds to 201–231; it reads VAPQVGGGTEPRGPQRPPQRLLDLSVFRDRG. The chain crosses the membrane as a helical span at residues 232-252; sequence FLIYAVAASIMVLGLFVPPVF. Residues 253–267 are Extracellular-facing; that stretch reads VVSYAKDMGVPDTKA. A helical transmembrane segment spans residues 268 to 288; it reads AFLLTILGFIDIFARPTAGFI. The Cytoplasmic portion of the chain corresponds to 289 to 298; sequence TGLKKVRPYS. Residues 299–319 traverse the membrane as a helical segment; the sequence is VYLFSFAMFFNGFTDLTGSTA. Residues 320–321 are Extracellular-facing; the sequence is TD. A helical membrane pass occupies residues 322-342; it reads YGGLVVFCIFFGISYGMVGAL. The Cytoplasmic segment spans residues 343–355; it reads QFEVLMAIVGTQK. A helical membrane pass occupies residues 356–376; the sequence is FSSAIGLVLLLEAVAVLIGPP. Residues 377 to 391 are Extracellular-facing; it reads SGGKLLDATKVYKYV. A helical transmembrane segment spans residues 392–412; the sequence is FILAGAEVLTSSLVLLLGNFF. Residues 413–470 lie on the Cytoplasmic side of the membrane; the sequence is CIGKRKRPEVTEPEEVASEEKLHKPPVDVGVDSREVEHFLKAEPEKNGEVVHTPETSV. Basolateral sorting signal regions lie at residues 429-446 and 446-470; these read ASEEKLHKPPVDVGVDSR and REVEHFLKAEPEKNGEVVHTPETSV. Position 430 is a phosphoserine (Ser430). At Thr465 the chain carries Phosphothreonine. Ser469 carries the phosphoserine modification.

This sequence belongs to the major facilitator superfamily. Monocarboxylate porter (TC 2.A.1.13) family. As to quaternary structure, interacts with BSG; interaction mediates SLC16A3 targeting to the plasma membrane.

The protein localises to the cell membrane. The protein resides in the basolateral cell membrane. It carries out the reaction (S)-lactate(in) + H(+)(in) = (S)-lactate(out) + H(+)(out). The enzyme catalyses pyruvate(out) + H(+)(out) = pyruvate(in) + H(+)(in). In terms of biological role, proton-dependent transporter of monocarboxylates such as L-lactate and pyruvate. Plays a predominant role in the L-lactate efflux from highly glycolytic cells. The polypeptide is Monocarboxylate transporter 4 (Slc16a3) (Mus musculus (Mouse)).